A 316-amino-acid chain; its full sequence is Protein U25 (316 aa).

It belongs to the herpesviridae US22 family.

In Human herpesvirus 6B (HHV-6 variant B), this protein is Protein U25 (U25).